The following is a 342-amino-acid chain: L-lysine 2,3-aminomutase (342 aa).

Residues 106-329 form the Radical SAM core domain; the sequence is HKYQNRALLL…PRLAREIGGE (224 aa). The [4Fe-4S] cluster site is built by Cys120, Cys124, and Cys127. Lys332 carries the N6-(pyridoxal phosphate)lysine modification.

This sequence belongs to the radical SAM superfamily. KamA family. The cofactor is [4Fe-4S] cluster. Pyridoxal 5'-phosphate is required as a cofactor.

The enzyme catalyses L-lysine = D-beta-lysine. In terms of biological role, with EpmA is involved in the beta-lysylation step of the post-translational modification of translation elongation factor P (EF-P) on 'Lys-34'. EpmB appears to act before EpmA. Displays lysine 2,3-aminomutase activity, producing (R)-beta-lysine from (S)-alpha-lysine (L-lysine). This Salmonella typhimurium (strain LT2 / SGSC1412 / ATCC 700720) protein is L-lysine 2,3-aminomutase (epmB).